Here is a 535-residue protein sequence, read N- to C-terminus: Light-independent protochlorophyllide reductase subunit B (535 aa).

A [4Fe-4S] cluster-binding site is contributed by aspartate 36. The Proton donor role is filled by aspartate 292. 428–429 contributes to the substrate binding site; sequence GL. Positions 446-483 are disordered; sequence DEASPSESAPHASNGHEDVAGGSTAQSVPSHAATEGDG.

The protein belongs to the ChlB/BchB/BchZ family. In terms of assembly, protochlorophyllide reductase is composed of three subunits; BchL, BchN and BchB. Forms a heterotetramer of two BchB and two BchN subunits. The cofactor is [4Fe-4S] cluster.

It catalyses the reaction chlorophyllide a + oxidized 2[4Fe-4S]-[ferredoxin] + 2 ADP + 2 phosphate = protochlorophyllide a + reduced 2[4Fe-4S]-[ferredoxin] + 2 ATP + 2 H2O. It participates in porphyrin-containing compound metabolism; bacteriochlorophyll biosynthesis (light-independent). Component of the dark-operative protochlorophyllide reductase (DPOR) that uses Mg-ATP and reduced ferredoxin to reduce ring D of protochlorophyllide (Pchlide) to form chlorophyllide a (Chlide). This reaction is light-independent. The NB-protein (BchN-BchB) is the catalytic component of the complex. This Chlorobium limicola (strain DSM 245 / NBRC 103803 / 6330) protein is Light-independent protochlorophyllide reductase subunit B.